Consider the following 253-residue polypeptide: Ubiquinone/menaquinone biosynthesis C-methyltransferase UbiE (253 aa).

S-adenosyl-L-methionine contacts are provided by residues Thr-76, Asp-97, and 125–126; that span reads NA.

The protein belongs to the class I-like SAM-binding methyltransferase superfamily. MenG/UbiE family.

It catalyses the reaction a 2-demethylmenaquinol + S-adenosyl-L-methionine = a menaquinol + S-adenosyl-L-homocysteine + H(+). The enzyme catalyses a 2-methoxy-6-(all-trans-polyprenyl)benzene-1,4-diol + S-adenosyl-L-methionine = a 5-methoxy-2-methyl-3-(all-trans-polyprenyl)benzene-1,4-diol + S-adenosyl-L-homocysteine + H(+). The protein operates within quinol/quinone metabolism; menaquinone biosynthesis; menaquinol from 1,4-dihydroxy-2-naphthoate: step 2/2. It participates in cofactor biosynthesis; ubiquinone biosynthesis. Its function is as follows. Methyltransferase required for the conversion of demethylmenaquinol (DMKH2) to menaquinol (MKH2) and the conversion of 2-polyprenyl-6-methoxy-1,4-benzoquinol (DDMQH2) to 2-polyprenyl-3-methyl-6-methoxy-1,4-benzoquinol (DMQH2). This chain is Ubiquinone/menaquinone biosynthesis C-methyltransferase UbiE, found in Rhodopseudomonas palustris (strain ATCC BAA-98 / CGA009).